We begin with the raw amino-acid sequence, 131 residues long: Large ribosomal subunit protein bL12c (131 aa).

Belongs to the bacterial ribosomal protein bL12 family. In terms of assembly, homodimer. Part of the ribosomal stalk of the 50S ribosomal subunit. Forms a multimeric L10(L12)X complex, where L10 forms an elongated spine to which 2 to 4 L12 dimers bind in a sequential fashion. Binds GTP-bound translation factors.

It is found in the plastid. The protein resides in the chloroplast. In terms of biological role, forms part of the ribosomal stalk which helps the ribosome interact with GTP-bound translation factors. Is thus essential for accurate translation. This Euglena gracilis protein is Large ribosomal subunit protein bL12c.